The chain runs to 370 residues: Polygalacturonase 1 (370 aa).

Positions 1–18 are cleaved as a signal peptide; it reads MRTSILSMLALGAAAVSA. C36 and C51 are oxidised to a cystine. 5 PbH1 repeats span residues 163–194, 195–216, 217–237, 246–267, and 275–297; these read ADNL…DVGE, STYI…AINS, GENI…SIGS, VKNV…RIKT, and VADV…VIEQ. D209 serves as the catalytic Proton donor. An intrachain disulfide couples C211 to C227. H231 is a catalytic residue. Residue N248 is glycosylated (N-linked (GlcNAc...) asparagine). 2 cysteine pairs are disulfide-bonded: C337/C342 and C361/C370.

This sequence belongs to the glycosyl hydrolase 28 family.

It localises to the secreted. It carries out the reaction (1,4-alpha-D-galacturonosyl)n+m + H2O = (1,4-alpha-D-galacturonosyl)n + (1,4-alpha-D-galacturonosyl)m.. In Penicillium olsonii, this protein is Polygalacturonase 1 (PG1).